Reading from the N-terminus, the 227-residue chain is Ribonuclease 3 (227 aa).

The RNase III domain maps to 4–133 (FEKLEKLLSY…LIAAIYLDSN (130 aa)). Position 46 (glutamate 46) interacts with Mg(2+). Residue aspartate 50 is part of the active site. Mg(2+) contacts are provided by asparagine 119 and glutamate 122. Glutamate 122 is a catalytic residue. Residues 158 to 226 (DPKTALQEWA…ARSLLHRLKN (69 aa)) form the DRBM domain.

This sequence belongs to the ribonuclease III family. In terms of assembly, homodimer. Requires Mg(2+) as cofactor.

It localises to the cytoplasm. The catalysed reaction is Endonucleolytic cleavage to 5'-phosphomonoester.. Digests double-stranded RNA. Involved in the processing of primary rRNA transcript to yield the immediate precursors to the large and small rRNAs (23S and 16S). Processes some mRNAs, and tRNAs when they are encoded in the rRNA operon. Processes pre-crRNA and tracrRNA of type II CRISPR loci if present in the organism. The chain is Ribonuclease 3 from Rickettsia africae (strain ESF-5).